Consider the following 364-residue polypeptide: RNA polymerase II holoenzyme cyclin-like subunit (364 aa).

One can recognise a Cyclin N-terminal domain in the interval Gln53–Ser143. A disordered region spans residues Pro268–Thr303. Residues Gln273 to Ser289 show a composition bias toward low complexity.

Belongs to the cyclin family. Cyclin C subfamily. In terms of assembly, component of the SRB8-11 complex, a regulatory module of the Mediator complex.

It localises to the nucleus. Component of the SRB8-11 complex. The SRB8-11 complex is a regulatory module of the Mediator complex which is itself involved in regulation of basal and activated RNA polymerase II-dependent transcription. The SRB8-11 complex may be involved in the transcriptional repression of a subset of genes regulated by Mediator. It may inhibit the association of the Mediator complex with RNA polymerase II to form the holoenzyme complex. The SRB8-11 complex phosphorylates the C-terminal domain (CTD) of the largest subunit of RNA polymerase II. In Chaetomium globosum (strain ATCC 6205 / CBS 148.51 / DSM 1962 / NBRC 6347 / NRRL 1970) (Soil fungus), this protein is RNA polymerase II holoenzyme cyclin-like subunit (SSN8).